A 172-amino-acid chain; its full sequence is ATP synthase subunit b (172 aa).

Residues V12–L32 form a helical membrane-spanning segment.

The protein belongs to the ATPase B chain family. F-type ATPases have 2 components, F(1) - the catalytic core - and F(0) - the membrane proton channel. F(1) has five subunits: alpha(3), beta(3), gamma(1), delta(1), epsilon(1). F(0) has three main subunits: a(1), b(2) and c(10-14). The alpha and beta chains form an alternating ring which encloses part of the gamma chain. F(1) is attached to F(0) by a central stalk formed by the gamma and epsilon chains, while a peripheral stalk is formed by the delta and b chains.

Its subcellular location is the cell membrane. F(1)F(0) ATP synthase produces ATP from ADP in the presence of a proton or sodium gradient. F-type ATPases consist of two structural domains, F(1) containing the extramembraneous catalytic core and F(0) containing the membrane proton channel, linked together by a central stalk and a peripheral stalk. During catalysis, ATP synthesis in the catalytic domain of F(1) is coupled via a rotary mechanism of the central stalk subunits to proton translocation. Its function is as follows. Component of the F(0) channel, it forms part of the peripheral stalk, linking F(1) to F(0). This Bacillus licheniformis (strain ATCC 14580 / DSM 13 / JCM 2505 / CCUG 7422 / NBRC 12200 / NCIMB 9375 / NCTC 10341 / NRRL NRS-1264 / Gibson 46) protein is ATP synthase subunit b.